A 226-amino-acid chain; its full sequence is Flagellar L-ring protein (226 aa).

Residues 1-15 (MRILGLSAALLILGG) form the signal peptide. Cys-16 carries N-palmitoyl cysteine lipidation. A lipid anchor (S-diacylglycerol cysteine) is attached at Cys-16.

It belongs to the FlgH family. In terms of assembly, the basal body constitutes a major portion of the flagellar organelle and consists of four rings (L,P,S, and M) mounted on a central rod.

The protein localises to the cell outer membrane. It is found in the bacterial flagellum basal body. Assembles around the rod to form the L-ring and probably protects the motor/basal body from shearing forces during rotation. The polypeptide is Flagellar L-ring protein (Alteromonas mediterranea (strain DSM 17117 / CIP 110805 / LMG 28347 / Deep ecotype)).